The chain runs to 59 residues: Small ribosomal subunit protein bS21A (59 aa).

Belongs to the bacterial ribosomal protein bS21 family.

The polypeptide is Small ribosomal subunit protein bS21A (Gloeobacter violaceus (strain ATCC 29082 / PCC 7421)).